The following is a 682-amino-acid chain: DNA-directed RNA polymerase subunit beta' (682 aa).

4 residues coordinate Zn(2+): Cys-69, Cys-71, Cys-87, and Cys-90. Asp-489, Asp-491, and Asp-493 together coordinate Mg(2+).

It belongs to the RNA polymerase beta' chain family. RpoC1 subfamily. In plastids the minimal PEP RNA polymerase catalytic core is composed of four subunits: alpha, beta, beta', and beta''. When a (nuclear-encoded) sigma factor is associated with the core the holoenzyme is formed, which can initiate transcription. The cofactor is Mg(2+). It depends on Zn(2+) as a cofactor.

It is found in the plastid. It localises to the chloroplast. It carries out the reaction RNA(n) + a ribonucleoside 5'-triphosphate = RNA(n+1) + diphosphate. Its function is as follows. DNA-dependent RNA polymerase catalyzes the transcription of DNA into RNA using the four ribonucleoside triphosphates as substrates. The polypeptide is DNA-directed RNA polymerase subunit beta' (Platanus occidentalis (Sycamore)).